Reading from the N-terminus, the 77-residue chain is Acyl carrier protein (77 aa).

One can recognise a Carrier domain in the interval methionine 1–lysine 76. Serine 36 is modified (O-(pantetheine 4'-phosphoryl)serine).

The protein belongs to the acyl carrier protein (ACP) family. In terms of processing, 4'-phosphopantetheine is transferred from CoA to a specific serine of apo-ACP by AcpS. This modification is essential for activity because fatty acids are bound in thioester linkage to the sulfhydryl of the prosthetic group.

The protein localises to the cytoplasm. The protein operates within lipid metabolism; fatty acid biosynthesis. Its function is as follows. Carrier of the growing fatty acid chain in fatty acid biosynthesis. In Campylobacter jejuni subsp. jejuni serotype O:6 (strain 81116 / NCTC 11828), this protein is Acyl carrier protein.